Here is a 149-residue protein sequence, read N- to C-terminus: Aquaporin-like protein 2 (149 aa).

Residues 1-35 (MSNESNDLEKNISHLDPTGVDNAYIPPEQPETKHS) form a disordered region. Residues 1-47 (MSNESNDLEKNISHLDPTGVDNAYIPPEQPETKHSRFNIDRDTLRNH) lie on the Cytoplasmic side of the membrane. A helical membrane pass occupies residues 48 to 68 (FIAAVGEFCGTFMFLWCAYVI). At 69-89 (CNVANHDVALTTEPEGSHPGQ) the chain is on the extracellular side. The helical transmembrane segment at 90 to 110 (LIMIALGFGFSVMFSIWCFWW) threads the bilayer. Topologically, residues 111–149 (GFEPSRFSLFVFGQSHLTSQMCSDVVSSDHCWDGCWWCR) are cytoplasmic.

The protein belongs to the MIP/aquaporin (TC 1.A.8) family.

The protein resides in the endoplasmic reticulum membrane. Its subcellular location is the cell membrane. Functionally, water channel required to facilitate the transport of water across membranes. Involved in freeze tolerance, osmotolerance and cell flocculation in liquid cultures. Is non-functional in most laboratory strains. This is Aquaporin-like protein 2 (AQY2-2) from Saccharomyces cerevisiae (strain JAY291) (Baker's yeast).